Consider the following 210-residue polypeptide: 23.6 kDa heat shock protein, mitochondrial (210 aa).

The N-terminal 31 residues, 1–31, are a transit peptide targeting the mitochondrion; sequence MASALALKRLLSSSIAPRSRSVLRPAVSSRL. One can recognise a sHSP domain in the interval 100 to 210; sequence MGASGARRGW…RNDVRQIEIN (111 aa). Positions 145 to 165 are disordered; the sequence is GEGKNEEDGGEEGESGNRRFT.

It belongs to the small heat shock protein (HSP20) family. In terms of assembly, may form oligomeric structures.

Its subcellular location is the mitochondrion. The polypeptide is 23.6 kDa heat shock protein, mitochondrial (HSP23.6) (Arabidopsis thaliana (Mouse-ear cress)).